The following is a 436-amino-acid chain: Testican-3 (436 aa).

An N-terminal signal peptide occupies residues 1–22; the sequence is MLKVSALLCVCAAAWCSQTLAA. Cystine bridges form between C90–C101, C95–C111, C139–C169, C142–C162, C151–C183, C317–C341, C352–C359, and C361–C380. The 53-residue stretch at 133–185 folds into the Kazal-like domain; it reads GLPSSTCKPCPIAYASPVCGSDGHSYSSQCKLEYQACVLGKQISIKCEGRCPC. The region spanning 314-380 is the Thyroglobulin type-1 domain; it reads DPPCHTELSN…GSRINGVADC (67 aa). S387 and S392 each carry an O-linked (Xyl...) (glycosaminoglycan) serine glycan. The interval 393–436 is disordered; that stretch reads GDFREWTDDEGEEDDIMNDKDDIEDDDEDEGDDDDDGDVHDGYI. Positions 399-430 are enriched in acidic residues; the sequence is TDDEGEEDDIMNDKDDIEDDDEDEGDDDDDGD.

In terms of processing, contains chondroitin sulfate and heparan sulfate O-linked oligosaccharides. In terms of tissue distribution, expressed in brain.

It is found in the secreted. It localises to the extracellular space. The protein localises to the extracellular matrix. Its function is as follows. May participate in diverse steps of neurogenesis. Inhibits the processing of pro-matrix metalloproteinase 2 (MMP-2) by MT1-MMP and MT3-MMP. May interfere with tumor invasion. The polypeptide is Testican-3 (Spock3) (Mus musculus (Mouse)).